The sequence spans 405 residues: Acetate kinase (405 aa).

Asn-13 serves as a coordination point for Mg(2+). Lys-20 is an ATP binding site. Residue Arg-94 coordinates substrate. The Proton donor/acceptor role is filled by Asp-153. ATP is bound by residues 213 to 217 (HLGNG), 288 to 290 (DFR), and 336 to 340 (GIGEN). Mg(2+) is bound at residue Glu-390.

It belongs to the acetokinase family. As to quaternary structure, homodimer. It depends on Mg(2+) as a cofactor. Requires Mn(2+) as cofactor.

It is found in the cytoplasm. The catalysed reaction is acetate + ATP = acetyl phosphate + ADP. It functions in the pathway metabolic intermediate biosynthesis; acetyl-CoA biosynthesis; acetyl-CoA from acetate: step 1/2. Catalyzes the formation of acetyl phosphate from acetate and ATP. Can also catalyze the reverse reaction. This chain is Acetate kinase, found in Buchnera aphidicola subsp. Acyrthosiphon pisum (strain APS) (Acyrthosiphon pisum symbiotic bacterium).